Consider the following 334-residue polypeptide: Ketol-acid reductoisomerase (NADP(+)) (334 aa).

Positions 1–181 constitute a KARI N-terminal Rossmann domain; the sequence is MNIYYDKNAD…GGGRTGILET (181 aa). NADP(+)-binding positions include 24–27, Arg47, Ser50, Ser52, and 82–85; these read YGSQ and DEFQ. His107 is a catalytic residue. NADP(+) is bound at residue Gly133. The region spanning 182–323 is the KARI C-terminal knotted domain; sequence SFKDETETDL…ESLRSMMPWI (142 aa). Mg(2+) contacts are provided by Asp190, Glu194, Glu226, and Glu230. Ser251 is a binding site for substrate.

It belongs to the ketol-acid reductoisomerase family. Requires Mg(2+) as cofactor.

It carries out the reaction (2R)-2,3-dihydroxy-3-methylbutanoate + NADP(+) = (2S)-2-acetolactate + NADPH + H(+). The catalysed reaction is (2R,3R)-2,3-dihydroxy-3-methylpentanoate + NADP(+) = (S)-2-ethyl-2-hydroxy-3-oxobutanoate + NADPH + H(+). The protein operates within amino-acid biosynthesis; L-isoleucine biosynthesis; L-isoleucine from 2-oxobutanoate: step 2/4. It functions in the pathway amino-acid biosynthesis; L-valine biosynthesis; L-valine from pyruvate: step 2/4. In terms of biological role, involved in the biosynthesis of branched-chain amino acids (BCAA). Catalyzes an alkyl-migration followed by a ketol-acid reduction of (S)-2-acetolactate (S2AL) to yield (R)-2,3-dihydroxy-isovalerate. In the isomerase reaction, S2AL is rearranged via a Mg-dependent methyl migration to produce 3-hydroxy-3-methyl-2-ketobutyrate (HMKB). In the reductase reaction, this 2-ketoacid undergoes a metal-dependent reduction by NADPH to yield (R)-2,3-dihydroxy-isovalerate. The chain is Ketol-acid reductoisomerase (NADP(+)) from Vesicomyosocius okutanii subsp. Calyptogena okutanii (strain HA).